A 60-amino-acid chain; its full sequence is Large ribosomal subunit protein bL32 (60 aa).

A disordered region spans residues 1 to 60 (MAVQQVKKSRSKRDMRRSHDSLTNPTLSTDKSTGELHLRHHVSPNGFYKGRKVVDTKSED). Basic residues predominate over residues 7–16 (KKSRSKRDMR). The segment covering 22 to 31 (LTNPTLSTDK) has biased composition (polar residues).

Belongs to the bacterial ribosomal protein bL32 family.

In Francisella tularensis subsp. holarctica (strain LVS), this protein is Large ribosomal subunit protein bL32.